Consider the following 317-residue polypeptide: Ribosomal RNA small subunit methyltransferase H (317 aa).

Residues 30 to 32, aspartate 50, tyrosine 74, aspartate 95, and glutamine 102 contribute to the S-adenosyl-L-methionine site; that span reads GGH.

The protein belongs to the methyltransferase superfamily. RsmH family.

The protein localises to the cytoplasm. The catalysed reaction is cytidine(1402) in 16S rRNA + S-adenosyl-L-methionine = N(4)-methylcytidine(1402) in 16S rRNA + S-adenosyl-L-homocysteine + H(+). Functionally, specifically methylates the N4 position of cytidine in position 1402 (C1402) of 16S rRNA. The chain is Ribosomal RNA small subunit methyltransferase H from Nitrosomonas europaea (strain ATCC 19718 / CIP 103999 / KCTC 2705 / NBRC 14298).